Reading from the N-terminus, the 249-residue chain is Type III pantothenate kinase (249 aa).

6 to 13 is a binding site for ATP; sequence DVGNTHTT. Position 101–104 (101–104) interacts with substrate; the sequence is GADR. Asp-103 serves as the catalytic Proton acceptor. Asp-123 is a K(+) binding site. Thr-126 serves as a coordination point for ATP. Position 177 (Thr-177) interacts with substrate.

It belongs to the type III pantothenate kinase family. As to quaternary structure, homodimer. NH4(+) serves as cofactor. The cofactor is K(+).

It is found in the cytoplasm. The enzyme catalyses (R)-pantothenate + ATP = (R)-4'-phosphopantothenate + ADP + H(+). It functions in the pathway cofactor biosynthesis; coenzyme A biosynthesis; CoA from (R)-pantothenate: step 1/5. Its function is as follows. Catalyzes the phosphorylation of pantothenate (Pan), the first step in CoA biosynthesis. The sequence is that of Type III pantothenate kinase from Thermosipho africanus (strain TCF52B).